Consider the following 176-residue polypeptide: Vitamin K epoxide reductase complex subunit 1-like protein 1 (176 aa).

Over 1-13 (MAAPVLLRVSVPR) the chain is Cytoplasmic. A helical membrane pass occupies residues 14-36 (WERVARYAVCAAGILLSIYAYHV). Residues 37–87 (EREKERDPEHRALCDLGPWVKCSAALASRWGRGFGLLGSIFGKDGVLNQPN) lie on the Lumenal side of the membrane. A disulfide bridge links Cys-50 with Cys-58. Asn-87 is a (S)-warfarin binding site. A helical transmembrane segment spans residues 88–102 (SVFGLIFYILQLLLG). At 103–107 (MTASA) the chain is on the cytoplasmic side. A helical transmembrane segment spans residues 108-135 (VAALILMTSSIMSVVGSLYLAYILYFVL). The Lumenal portion of the chain corresponds to 136–138 (KEF). A disulfide bond links Cys-139 and Cys-142. The chain crosses the membrane as a helical span at residues 139-160 (CIICIVTYVLNFLLLIINYKRL). 2 residues coordinate phylloquinone: Cys-142 and Tyr-146. Tyr-146 is a binding site for (S)-warfarin. At 161–176 (VYLNEAWKRQLQPKQD) the chain is on the cytoplasmic side.

Belongs to the VKOR family.

It is found in the endoplasmic reticulum membrane. It catalyses the reaction phylloquinone + [protein]-disulfide + H2O = 2,3-epoxyphylloquinone + [protein]-dithiol. The catalysed reaction is phylloquinol + [protein]-disulfide = phylloquinone + [protein]-dithiol. With respect to regulation, inhibited by warfarin (coumadin). Warfarin locks VKORC1 in both redox states into the closed conformation. In terms of biological role, involved in vitamin K metabolism. Can reduce inactive vitamin K 2,3-epoxide to active vitamin K, and may contribute to vitamin K-mediated protection against oxidative stress. Plays a role in vitamin K-dependent gamma-carboxylation of Glu residues in target proteins. This is Vitamin K epoxide reductase complex subunit 1-like protein 1 (VKORC1L1) from Homo sapiens (Human).